The sequence spans 264 residues: Small ribosomal subunit protein uS2 (264 aa).

The protein belongs to the universal ribosomal protein uS2 family.

The polypeptide is Small ribosomal subunit protein uS2 (rpsB) (Helicobacter pylori (strain ATCC 700392 / 26695) (Campylobacter pylori)).